The primary structure comprises 300 residues: MSQVTENKVISAPVPMTPLQEFWHYFKRNKGAVVGLVYVVIVLFIAIFANWIAPYNPAEQFRDALLAPPAWQEGGSMAHLLGTDDVGRDVLSRLMYGARLSLLVGCLVVVLSLIMGVILGLIAGYFGGLVDNIIMRVVDIMLALPSLLLALVLVAIFGPSIGNAALALTFVALPHYVRLTRAAVLVEVNRDYVTASRVAGAGAMRQMFINIFPNCLAPLIVQASLGFSNAILDMAALGFLGMGAQPPTPEWGTMLSDVLQFAQSAWWVVTFPGLAILLTVLAFNLMGDGLRDALDPKLKQ.

Topologically, residues 1-31 are cytoplasmic; the sequence is MSQVTENKVISAPVPMTPLQEFWHYFKRNKG. A helical membrane pass occupies residues 32 to 52; sequence AVVGLVYVVIVLFIAIFANWI. Residues 53 to 101 lie on the Periplasmic side of the membrane; sequence APYNPAEQFRDALLAPPAWQEGGSMAHLLGTDDVGRDVLSRLMYGARLS. The ABC transmembrane type-1 domain maps to 98–287; it reads ARLSLLVGCL…LTVLAFNLMG (190 aa). The chain crosses the membrane as a helical span at residues 102–122; the sequence is LLVGCLVVVLSLIMGVILGLI. Residues 123–136 are Cytoplasmic-facing; it reads AGYFGGLVDNIIMR. A helical transmembrane segment spans residues 137 to 157; sequence VVDIMLALPSLLLALVLVAIF. Residues 158-206 lie on the Periplasmic side of the membrane; that stretch reads GPSIGNAALALTFVALPHYVRLTRAAVLVEVNRDYVTASRVAGAGAMRQ. Residues 207-227 form a helical membrane-spanning segment; it reads MFINIFPNCLAPLIVQASLGF. Residues 228–230 lie on the Cytoplasmic side of the membrane; that stretch reads SNA. Residues 231–251 form a helical membrane-spanning segment; it reads ILDMAALGFLGMGAQPPTPEW. Residues 252-265 lie on the Periplasmic side of the membrane; sequence GTMLSDVLQFAQSA. The chain crosses the membrane as a helical span at residues 266–286; sequence WWVVTFPGLAILLTVLAFNLM. Residues 287-300 are Cytoplasmic-facing; it reads GDGLRDALDPKLKQ.

This sequence belongs to the binding-protein-dependent transport system permease family. OppBC subfamily. As to quaternary structure, the complex is composed of two ATP-binding proteins (DppD and DppF), two transmembrane proteins (DppB and DppC) and a solute-binding protein (DppA).

Its subcellular location is the cell inner membrane. Part of the ABC transporter DppABCDF involved in dipeptide transport. Responsible for the translocation of the substrate across the membrane. The polypeptide is Dipeptide transport system permease protein DppC (dppC) (Escherichia coli O157:H7).